Reading from the N-terminus, the 222-residue chain is Octanoyltransferase (222 aa).

One can recognise a BPL/LPL catalytic domain in the interval Gly-34 to Val-214. Substrate contacts are provided by residues Arg-72–His-79, Ala-144–Gly-146, and Gly-157–Ala-159. The active-site Acyl-thioester intermediate is Cys-175.

It belongs to the LipB family.

Its subcellular location is the cytoplasm. It carries out the reaction octanoyl-[ACP] + L-lysyl-[protein] = N(6)-octanoyl-L-lysyl-[protein] + holo-[ACP] + H(+). It functions in the pathway protein modification; protein lipoylation via endogenous pathway; protein N(6)-(lipoyl)lysine from octanoyl-[acyl-carrier-protein]: step 1/2. In terms of biological role, catalyzes the transfer of endogenously produced octanoic acid from octanoyl-acyl-carrier-protein onto the lipoyl domains of lipoate-dependent enzymes. Lipoyl-ACP can also act as a substrate although octanoyl-ACP is likely to be the physiological substrate. The polypeptide is Octanoyltransferase (Paenarthrobacter aurescens (strain TC1)).